A 20-amino-acid polypeptide reads, in one-letter code: DCCYGRVNGCNPKMADKNYE.

This sequence belongs to the phospholipase A2 family. Group II subfamily. D49 sub-subfamily. Heterodimer of an acidic subunit (CbIalpha or CbIbeta) and a basic subunit (CbII). The acidic subunit (CbI) is non-toxic, and increases the toxicity of the basic subunit (CbII). Ca(2+) serves as cofactor. In terms of processing, contains 7 disulfide bonds. As to expression, expressed by the venom gland.

Its subcellular location is the secreted. The catalysed reaction is a 1,2-diacyl-sn-glycero-3-phosphocholine + H2O = a 1-acyl-sn-glycero-3-phosphocholine + a fatty acid + H(+). Functionally, heterodimer: presynaptic neurotoxin. In terms of biological role, monomer: Snake venom phospholipase A2 (PLA2) is inactive towards micellar phosphatidylcholine but is weakly active towards non-micellar dithiolecithin. PLA2 catalyzes the calcium-dependent hydrolysis of the 2-acyl groups in 3-sn-phosphoglycerides. The polypeptide is Acidic phospholipase A2 CbIbeta (Pseudocerastes fieldi (Field's horned viper)).